Reading from the N-terminus, the 608-residue chain is ATP-citrate synthase beta chain protein 1 (608 aa).

ATP is bound by residues 214 to 234 (ILRFNNIPQIKMVVVLGELGG) and 265 to 291 (FKSEVQFGHAGAKSGGEMESAQAKNQA). Residue glutamate 231 participates in Mg(2+) binding. The active-site Tele-phosphohistidine intermediate is histidine 273. Residue 292 to 302 (LQDAGATVPTS) coordinates CoA.

Belongs to the succinate/malate CoA ligase alpha subunit family. Heterooctamer of 4 alpha and 4 beta chains.

It localises to the cytoplasm. The protein localises to the cytosol. The catalysed reaction is oxaloacetate + acetyl-CoA + ADP + phosphate = citrate + ATP + CoA. ATP citrate-lyase is the primary enzyme responsible for the synthesis of cytosolic acetyl-CoA, used for the elongation of fatty acids and biosynthesis of isoprenoids, flavonoids and malonated derivatives. May supply substrate to the cytosolic acetyl-CoA carboxylase, which generates the malonyl-CoA used for the synthesis of a multitude of compounds, including very long chain fatty acids and flavonoids. Required for normal growth and development and elongation of C18 fatty acids to C20 to C24 fatty acids in seeds. In contrast to all known animal ACL enzymes having a homomeric structure, plant ACLs are composed of alpha and beta chains. The sequence is that of ATP-citrate synthase beta chain protein 1 (ACLB-1) from Arabidopsis thaliana (Mouse-ear cress).